We begin with the raw amino-acid sequence, 329 residues long: Cathepsin K (329 aa).

Residues 1 to 15 form the signal peptide; it reads MWGLTVLLLPVVSFA. A propeptide spans 16–114 (activation peptide); that stretch reads LYPEEILDTQ…TLYIPDWEGR (99 aa). The N-linked (GlcNAc...) asparagine glycan is linked to Asn-103. 3 cysteine pairs are disulfide-bonded: Cys-136–Cys-177, Cys-170–Cys-210, and Cys-269–Cys-318. Residue Cys-139 is part of the active site. Active-site residues include His-276 and Asn-296.

The protein belongs to the peptidase C1 family.

It is found in the lysosome. It localises to the secreted. Its subcellular location is the apical cell membrane. The catalysed reaction is Broad proteolytic activity. With small-molecule substrates and inhibitors, the major determinant of specificity is P2, which is preferably Leu, Met &gt; Phe, and not Arg.. Its function is as follows. Thiol protease involved in osteoclastic bone resorption and may participate partially in the disorder of bone remodeling. Displays potent endoprotease activity against fibrinogen at acid pH. May play an important role in extracellular matrix degradation. Involved in the release of thyroid hormone thyroxine (T4) by limited proteolysis of TG/thyroglobulin in the thyroid follicle lumen. This Bos taurus (Bovine) protein is Cathepsin K (CTSK).